We begin with the raw amino-acid sequence, 168 residues long: Photosystem I assembly protein Ycf3 (168 aa).

TPR repeat units follow at residues 35–68, 72–105, and 120–153; these read AFTYYRDGMSAQSEGEYAEALQNYYEAMRLEIDP, SYILYNIGLIHTSNGEHAKALEYYFQALERNPSL, and GEQAIQQGDSETSEAWFNQAADYWKQAIALAPSN.

Belongs to the Ycf3 family.

The protein localises to the plastid. Its subcellular location is the chloroplast thylakoid membrane. Functionally, essential for the assembly of the photosystem I (PSI) complex. May act as a chaperone-like factor to guide the assembly of the PSI subunits. This chain is Photosystem I assembly protein Ycf3, found in Physcomitrium patens (Spreading-leaved earth moss).